Here is a 301-residue protein sequence, read N- to C-terminus: Cytosolic sulfotransferase 2 (301 aa).

53–58 (KAGTTW) lines the 3'-phosphoadenylyl sulfate pocket. The active-site Proton acceptor is histidine 115. Residues arginine 137, serine 145, tyrosine 201, 235–240 (VQFDVM), and 263–265 (RKG) contribute to the 3'-phosphoadenylyl sulfate site.

The protein belongs to the sulfotransferase 1 family. Expressed in liver.

It localises to the cytoplasm. Inhibited by Co(2+), Zn(2+), Cd(2+) and Pb(2+) ions. Inactivated by Hg(2+) and Cu(2+) ions. Sulfotransferase that utilizes 3'-phospho-5'-adenylyl sulfate (PAPS) as sulfonate donor to catalyze the sulfate conjugation of a variety of xenobiotic and endogenous compounds, including 2-naphthol, hydroxychlorobiphenyls, T3 (triiodo-L-thyronine), T4 (thyroxine), estrone and DOPA. This chain is Cytosolic sulfotransferase 2, found in Danio rerio (Zebrafish).